A 223-amino-acid chain; its full sequence is Kynurenine formamidase (223 aa).

Phe34 serves as a coordination point for substrate. The Zn(2+) site is built by His64, His68, and Asp70. His74 (proton donor/acceptor) is an active-site residue. Zn(2+)-binding residues include His174 and Glu186.

Belongs to the Cyclase 1 superfamily. KynB family. As to quaternary structure, homodimer. Requires Zn(2+) as cofactor.

The enzyme catalyses N-formyl-L-kynurenine + H2O = L-kynurenine + formate + H(+). Its pathway is amino-acid degradation; L-tryptophan degradation via kynurenine pathway; L-kynurenine from L-tryptophan: step 2/2. Functionally, catalyzes the hydrolysis of N-formyl-L-kynurenine to L-kynurenine, the second step in the kynurenine pathway of tryptophan degradation. The protein is Kynurenine formamidase of Polaromonas naphthalenivorans (strain CJ2).